The primary structure comprises 236 residues: (5-formylfuran-3-yl)methyl phosphate synthase (236 aa).

K27 functions as the Schiff-base intermediate with substrate in the catalytic mechanism. K85 functions as the Proton acceptor in the catalytic mechanism.

Belongs to the MfnB family.

It catalyses the reaction 2 D-glyceraldehyde 3-phosphate = 4-(hydroxymethyl)-2-furancarboxaldehyde phosphate + phosphate + 2 H2O. It participates in cofactor biosynthesis; methanofuran biosynthesis. Functionally, catalyzes the formation of 4-(hydroxymethyl)-2-furancarboxaldehyde phosphate (4-HFC-P) from two molecules of glyceraldehyde-3-P (GA-3-P). This is (5-formylfuran-3-yl)methyl phosphate synthase from Methanococcus maripaludis (strain C6 / ATCC BAA-1332).